The sequence spans 962 residues: Phenylalanine--tRNA ligase beta subunit (962 aa).

The tRNA-binding domain occupies 85 to 201 (TIRWCKVRVC…AEVFQGDELS (117 aa)). A B5 domain is found at 456–538 (TQQSPILLST…RVIGFNRIPS (83 aa)). Mg(2+)-binding residues include Asp516, Asp522, Glu525, and Glu526. Positions 621–675 (PDSTHNPDSGSDPIIPTGVTRITEPGSSGVSGPGNVGVKEKCSADTSIEHAPTTR) are insert. The region spanning 870–961 (PTSPAATQHL…ASSKFGAIMR (92 aa)) is the FDX-ACB domain.

It belongs to the phenylalanyl-tRNA synthetase beta subunit family. Type 1 subfamily. In terms of assembly, tetramer of two alpha and two beta subunits. Requires Mg(2+) as cofactor.

The protein resides in the cytoplasm. The catalysed reaction is tRNA(Phe) + L-phenylalanine + ATP = L-phenylalanyl-tRNA(Phe) + AMP + diphosphate + H(+). This chain is Phenylalanine--tRNA ligase beta subunit, found in Tropheryma whipplei (strain Twist) (Whipple's bacillus).